The sequence spans 152 residues: D-aminoacyl-tRNA deacylase (152 aa).

The short motif at 142-143 is the Gly-cisPro motif, important for rejection of L-amino acids element; sequence GP.

This sequence belongs to the DTD family. Homodimer.

It is found in the cytoplasm. It carries out the reaction glycyl-tRNA(Ala) + H2O = tRNA(Ala) + glycine + H(+). The catalysed reaction is a D-aminoacyl-tRNA + H2O = a tRNA + a D-alpha-amino acid + H(+). In terms of biological role, an aminoacyl-tRNA editing enzyme that deacylates mischarged D-aminoacyl-tRNAs. Also deacylates mischarged glycyl-tRNA(Ala), protecting cells against glycine mischarging by AlaRS. Acts via tRNA-based rather than protein-based catalysis; rejects L-amino acids rather than detecting D-amino acids in the active site. By recycling D-aminoacyl-tRNA to D-amino acids and free tRNA molecules, this enzyme counteracts the toxicity associated with the formation of D-aminoacyl-tRNA entities in vivo and helps enforce protein L-homochirality. The polypeptide is D-aminoacyl-tRNA deacylase (Burkholderia ambifaria (strain ATCC BAA-244 / DSM 16087 / CCUG 44356 / LMG 19182 / AMMD) (Burkholderia cepacia (strain AMMD))).